A 1189-amino-acid polypeptide reads, in one-letter code: Intraflagellar transport protein 122 homolog (1189 aa).

WD repeat units follow at residues 16 to 54 (KLEQ…MIQP), 57 to 97 (GHKD…LKYT), 99 to 135 (NDSI…VSKH), 137 to 175 (VSSK…KVKI), 180 to 223 (GALS…VGKD), 225 to 264 (VLGF…LGPI), 266 to 306 (EQNS…HGLY), and 459 to 498 (KQAT…LLFQ).

As to quaternary structure, component of the IFT complex A (IFT-A) complex.

Its subcellular location is the cell projection. It is found in the cilium. The protein resides in the cytoplasm. It localises to the cytoskeleton. The protein localises to the cilium basal body. In terms of biological role, required for cilia formation during embryonal development. Acts as a negative regulator of Shh signaling. The protein is Intraflagellar transport protein 122 homolog (ift122) of Xenopus tropicalis (Western clawed frog).